A 594-amino-acid polypeptide reads, in one-letter code: NADH-ubiquinone oxidoreductase chain 5 (594 aa).

A run of 15 helical transmembrane segments spans residues 1–21 (MNLFSSTTLTMLFVLTLPIMM), 43–63 (AFLISLVPMIAFTNTGQEMII), 87–107 (IVFAPVALFVTWSIMEFSMWY), 114–134 (INQFFKYLLLFLITMMILVTA), 137–157 (LFQLFIGWEGVGIMSFLLIGW), 171–191 (AILYNRIGDVGFIMAMAWFLS), 211–233 (LPLMGLILAATGKSAQFGLHPWL), 241–261 (TPVSALLHSSTMVVAGVFLLI), 272–292 (LMQTITMCLGAITTLFTAMCA), 301–320 (IIAFSTSSQLGLMMVTIGIN), 325–347 (AFLHICTHAFFKAMLFMCSGSII), 366–386 (MPFTTTTLIVGSMALTGVPFL), 409–429 (LLITLVATSLTAVYSTRIIFF), 457–477 (LMAGSIFAGFILSHNLPPMTT), and 486–506 (LKMTALAVTMLGFTLAFEITL).

The protein belongs to the complex I subunit 5 family. Core subunit of respiratory chain NADH dehydrogenase (Complex I) which is composed of 45 different subunits.

The protein localises to the mitochondrion inner membrane. It carries out the reaction a ubiquinone + NADH + 5 H(+)(in) = a ubiquinol + NAD(+) + 4 H(+)(out). In terms of biological role, core subunit of the mitochondrial membrane respiratory chain NADH dehydrogenase (Complex I) which catalyzes electron transfer from NADH through the respiratory chain, using ubiquinone as an electron acceptor. Essential for the catalytic activity and assembly of complex I. The polypeptide is NADH-ubiquinone oxidoreductase chain 5 (MT-ND5) (Hippopotamus amphibius (Hippopotamus)).